Reading from the N-terminus, the 372-residue chain is NAD(P)H-quinone oxidoreductase subunit 1 (372 aa).

Helical transmembrane passes span 27–47, 97–117, 128–148, 176–196, 204–224, 266–286, 308–328, and 347–367; these read IIWL…GVLV, ILFT…WLIV, VGIG…GLLM, LALS…IDIV, ILSW…ICAL, ILSA…PIPV, SIGI…AILL, and FLLP…LAFP.

It belongs to the complex I subunit 1 family. As to quaternary structure, NDH-1 is composed of at least 11 different subunits.

The protein localises to the cellular thylakoid membrane. The enzyme catalyses a plastoquinone + NADH + (n+1) H(+)(in) = a plastoquinol + NAD(+) + n H(+)(out). The catalysed reaction is a plastoquinone + NADPH + (n+1) H(+)(in) = a plastoquinol + NADP(+) + n H(+)(out). NDH-1 shuttles electrons from an unknown electron donor, via FMN and iron-sulfur (Fe-S) centers, to quinones in the respiratory and/or the photosynthetic chain. The immediate electron acceptor for the enzyme in this species is believed to be plastoquinone. Couples the redox reaction to proton translocation, and thus conserves the redox energy in a proton gradient. The sequence is that of NAD(P)H-quinone oxidoreductase subunit 1 from Prochlorococcus marinus (strain MIT 9312).